Reading from the N-terminus, the 305-residue chain is Putative lipid kinase USA300HOU_0749 (305 aa).

The 137-residue stretch at 3–139 folds into the DAGKc domain; that stretch reads NKYTHGVLFY…YDVIKINNQY (137 aa). ATP contacts are provided by residues Ser-44, 74-80, and Thr-101; that span reads GDGTVNE. Mg(2+) contacts are provided by Ser-220, Asp-223, and Glu-225. The active-site Proton acceptor is Glu-281.

The protein belongs to the diacylglycerol/lipid kinase family. Mg(2+) serves as cofactor.

Functionally, may catalyze the ATP-dependent phosphorylation of lipids other than diacylglycerol (DAG). The polypeptide is Putative lipid kinase USA300HOU_0749 (Staphylococcus aureus (strain USA300 / TCH1516)).